The sequence spans 513 residues: Meiotically up-regulated gene 133 protein (513 aa).

Belongs to the UPF0300 family.

It is found in the golgi apparatus. The protein resides in the vacuole membrane. In terms of biological role, has a role in meiosis. The protein is Meiotically up-regulated gene 133 protein (mug133) of Schizosaccharomyces pombe (strain 972 / ATCC 24843) (Fission yeast).